Here is a 395-residue protein sequence, read N- to C-terminus: Tryptophan synthase beta chain (395 aa).

At K89 the chain carries N6-(pyridoxal phosphate)lysine.

Belongs to the TrpB family. Tetramer of two alpha and two beta chains. Pyridoxal 5'-phosphate serves as cofactor.

The enzyme catalyses (1S,2R)-1-C-(indol-3-yl)glycerol 3-phosphate + L-serine = D-glyceraldehyde 3-phosphate + L-tryptophan + H2O. It functions in the pathway amino-acid biosynthesis; L-tryptophan biosynthesis; L-tryptophan from chorismate: step 5/5. Its function is as follows. The beta subunit is responsible for the synthesis of L-tryptophan from indole and L-serine. The polypeptide is Tryptophan synthase beta chain (Fusobacterium nucleatum subsp. nucleatum (strain ATCC 25586 / DSM 15643 / BCRC 10681 / CIP 101130 / JCM 8532 / KCTC 2640 / LMG 13131 / VPI 4355)).